Here is a 210-residue protein sequence, read N- to C-terminus: MTAWVGLTGGIGSGKSAAAQYFADLRVPRIDADRAAHSLTASDGIALPEIRRLFGDTVFDTQGLLRRDILRKEIFASPSRKALLESVMLPLIFSEIKKQQETFTDAVYGIVEIPLLTEKRQFISLIRRVLTISAPLEKRIGRVMARSGLTRGEVADIISHQASESERLLLADDVLLNDGSLKSLREKTMLLHAFYSGIFASKPTQGKHNG.

The DPCK domain occupies 4–202 (WVGLTGGIGS…AFYSGIFASK (199 aa)). Residue 12–17 (GSGKSA) coordinates ATP.

It belongs to the CoaE family.

Its subcellular location is the cytoplasm. The catalysed reaction is 3'-dephospho-CoA + ATP = ADP + CoA + H(+). It participates in cofactor biosynthesis; coenzyme A biosynthesis; CoA from (R)-pantothenate: step 5/5. In terms of biological role, catalyzes the phosphorylation of the 3'-hydroxyl group of dephosphocoenzyme A to form coenzyme A. The sequence is that of Dephospho-CoA kinase from Neisseria gonorrhoeae.